Here is a 90-residue protein sequence, read N- to C-terminus: ATP synthase subunit c (90 aa).

A run of 2 helical transmembrane segments spans residues 17 to 37 and 70 to 90; these read PLAY…AGVV and LAIV…IIFV.

The protein belongs to the ATPase C chain family. As to quaternary structure, F-type ATPases have 2 components, F(1) - the catalytic core - and F(0) - the membrane proton channel. F(1) has five subunits: alpha(3), beta(3), gamma(1), delta(1), epsilon(1). F(0) has three main subunits: a(1), b(2) and c(10-14). The alpha and beta chains form an alternating ring which encloses part of the gamma chain. F(1) is attached to F(0) by a central stalk formed by the gamma and epsilon chains, while a peripheral stalk is formed by the delta and b chains.

It localises to the cell membrane. In terms of biological role, f(1)F(0) ATP synthase produces ATP from ADP in the presence of a proton or sodium gradient. F-type ATPases consist of two structural domains, F(1) containing the extramembraneous catalytic core and F(0) containing the membrane proton channel, linked together by a central stalk and a peripheral stalk. During catalysis, ATP synthesis in the catalytic domain of F(1) is coupled via a rotary mechanism of the central stalk subunits to proton translocation. Key component of the F(0) channel; it plays a direct role in translocation across the membrane. A homomeric c-ring of between 10-14 subunits forms the central stalk rotor element with the F(1) delta and epsilon subunits. In Metamycoplasma arthritidis (strain 158L3-1) (Mycoplasma arthritidis), this protein is ATP synthase subunit c.